Consider the following 253-residue polypeptide: Tyrosine recombinase XerD-like (253 aa).

The region spanning 8 to 81 is the Core-binding (CB) domain; the sequence is KQLTTQITNF…AVNQFLLYLY (74 aa). The 161-residue stretch at 93 to 253 folds into the Tyr recombinase domain; that stretch reads SETAPLPSQQ…PVTLEKYYKT (161 aa). Active-site residues include Lys-157 and Arg-218. Tyr-250 acts as the O-(3'-phospho-DNA)-tyrosine intermediate in catalysis.

The protein belongs to the 'phage' integrase family. XerD-like subfamily.

The protein localises to the cytoplasm. Its function is as follows. Putative tyrosine recombinase. Not involved in the cutting and rejoining of the recombining DNA molecules on dif(SL) site. The polypeptide is Tyrosine recombinase XerD-like (Streptococcus thermophilus (strain CNRZ 1066)).